A 545-amino-acid chain; its full sequence is Chaperonin GroEL 1 (545 aa).

Residues 29-32 (TLGP), 86-90 (DGTTT), glycine 413, 479-481 (DAA), and aspartate 495 contribute to the ATP site. Residues 525–545 (PEPKENNPAGSGAGMGGDFDY) form a disordered region. Gly residues predominate over residues 535–545 (SGAGMGGDFDY).

Belongs to the chaperonin (HSP60) family. In terms of assembly, forms a cylinder of 14 subunits composed of two heptameric rings stacked back-to-back. Interacts with the co-chaperonin GroES.

The protein resides in the cytoplasm. It carries out the reaction ATP + H2O + a folded polypeptide = ADP + phosphate + an unfolded polypeptide.. Functionally, together with its co-chaperonin GroES, plays an essential role in assisting protein folding. The GroEL-GroES system forms a nano-cage that allows encapsulation of the non-native substrate proteins and provides a physical environment optimized to promote and accelerate protein folding. This is Chaperonin GroEL 1 from Thermostichus vulcanus (Synechococcus vulcanus).